The following is a 264-amino-acid chain: Thymidylate synthase (264 aa).

R21 contributes to the dUMP binding site. Residue H51 participates in (6R)-5,10-methylene-5,6,7,8-tetrahydrofolate binding. Residue 126 to 127 (RR) coordinates dUMP. The active-site Nucleophile is C146. DUMP contacts are provided by residues 166–169 (RSAD), N177, and 207–209 (HIY). D169 serves as a coordination point for (6R)-5,10-methylene-5,6,7,8-tetrahydrofolate. Residue A263 participates in (6R)-5,10-methylene-5,6,7,8-tetrahydrofolate binding.

The protein belongs to the thymidylate synthase family. Bacterial-type ThyA subfamily. Homodimer.

The protein resides in the cytoplasm. It catalyses the reaction dUMP + (6R)-5,10-methylene-5,6,7,8-tetrahydrofolate = 7,8-dihydrofolate + dTMP. Its pathway is pyrimidine metabolism; dTTP biosynthesis. Functionally, catalyzes the reductive methylation of 2'-deoxyuridine-5'-monophosphate (dUMP) to 2'-deoxythymidine-5'-monophosphate (dTMP) while utilizing 5,10-methylenetetrahydrofolate (mTHF) as the methyl donor and reductant in the reaction, yielding dihydrofolate (DHF) as a by-product. This enzymatic reaction provides an intracellular de novo source of dTMP, an essential precursor for DNA biosynthesis. The protein is Thymidylate synthase of Brucella abortus (strain 2308).